The chain runs to 194 residues: Protein GrpE (194 aa).

A compositionally biased stretch (basic and acidic residues) spans methionine 1–glutamine 24. Positions methionine 1–glutamate 41 are disordered.

This sequence belongs to the GrpE family. As to quaternary structure, homodimer.

The protein localises to the cytoplasm. Its function is as follows. Participates actively in the response to hyperosmotic and heat shock by preventing the aggregation of stress-denatured proteins, in association with DnaK and GrpE. It is the nucleotide exchange factor for DnaK and may function as a thermosensor. Unfolded proteins bind initially to DnaJ; upon interaction with the DnaJ-bound protein, DnaK hydrolyzes its bound ATP, resulting in the formation of a stable complex. GrpE releases ADP from DnaK; ATP binding to DnaK triggers the release of the substrate protein, thus completing the reaction cycle. Several rounds of ATP-dependent interactions between DnaJ, DnaK and GrpE are required for fully efficient folding. This chain is Protein GrpE, found in Carboxydothermus hydrogenoformans (strain ATCC BAA-161 / DSM 6008 / Z-2901).